We begin with the raw amino-acid sequence, 360 residues long: 1-aminocyclopropane-1-carboxylate oxidase homolog 6 (360 aa).

In terms of domain architecture, Fe2OG dioxygenase spans 208 to 309 (KGLLLLCHYY…ISVASFFSTS (102 aa)). Residues H232, D234, and H288 each contribute to the Fe cation site. R299 provides a ligand contact to 2-oxoglutarate.

Belongs to the iron/ascorbate-dependent oxidoreductase family. It depends on Fe(2+) as a cofactor. Constitutively expressed in leaves and blades.

This chain is 1-aminocyclopropane-1-carboxylate oxidase homolog 6, found in Arabidopsis thaliana (Mouse-ear cress).